The primary structure comprises 98 residues: NADH-ubiquinone oxidoreductase chain 4L (98 aa).

Helical transmembrane passes span 2–22 (SPIY…TLLF), 26–46 (LMST…MVTS), and 61–81 (ITML…LVMI).

This sequence belongs to the complex I subunit 4L family. As to quaternary structure, core subunit of respiratory chain NADH dehydrogenase (Complex I) which is composed of 45 different subunits.

It localises to the mitochondrion inner membrane. It catalyses the reaction a ubiquinone + NADH + 5 H(+)(in) = a ubiquinol + NAD(+) + 4 H(+)(out). Core subunit of the mitochondrial membrane respiratory chain NADH dehydrogenase (Complex I) which catalyzes electron transfer from NADH through the respiratory chain, using ubiquinone as an electron acceptor. Part of the enzyme membrane arm which is embedded in the lipid bilayer and involved in proton translocation. This chain is NADH-ubiquinone oxidoreductase chain 4L (MT-ND4L), found in Nephelomys albigularis (Tomes's rice rat).